Here is a 61-residue protein sequence, read N- to C-terminus: DNA-binding protein 7a (61 aa).

Residues 37 to 61 (NGKTGRGAVSEKDAPKELLEKLEKK) are disordered. Positions 45 to 61 (VSEKDAPKELLEKLEKK) are enriched in basic and acidic residues.

Belongs to the 7 kDa DNA-binding/endoribonuclease P2 family. As to quaternary structure, monomer.

The protein resides in the cytoplasm. Functionally, can constrain negative DNA supercoils. May be involved in maintaining the integrity of the genome at high temperature. This chain is DNA-binding protein 7a, found in Acidianus hospitalis (strain W1).